A 375-amino-acid chain; its full sequence is Probable serine/threonine-protein kinase PBL28 (375 aa).

Phosphothreonine is present on Thr65. The region spanning 76 to 356 is the Protein kinase domain; sequence FSDENLLGKG…MDCVKELQLI (281 aa). ATP contacts are provided by residues 82–90 and Lys104; that span reads LGKGGFGRV. Tyr152 carries the post-translational modification Phosphotyrosine. Asp205 acts as the Proton acceptor in catalysis. Thr245 carries the post-translational modification Phosphothreonine. Tyr253 is subject to Phosphotyrosine.

Belongs to the protein kinase superfamily. Ser/Thr protein kinase family.

Its subcellular location is the cell membrane. The enzyme catalyses L-seryl-[protein] + ATP = O-phospho-L-seryl-[protein] + ADP + H(+). The catalysed reaction is L-threonyl-[protein] + ATP = O-phospho-L-threonyl-[protein] + ADP + H(+). Functionally, may be involved in plant defense signaling. The polypeptide is Probable serine/threonine-protein kinase PBL28 (Arabidopsis thaliana (Mouse-ear cress)).